The chain runs to 92 residues: Small ribosomal subunit protein uS19c (92 aa).

Belongs to the universal ribosomal protein uS19 family.

It is found in the plastid. Its subcellular location is the chloroplast. Protein S19 forms a complex with S13 that binds strongly to the 16S ribosomal RNA. This chain is Small ribosomal subunit protein uS19c, found in Cyanidium caldarium (Red alga).